The primary structure comprises 606 residues: Lysosomal cobalamin transporter ABCD4 (606 aa).

An ABC transmembrane type-1 domain is found at 39-332 (NALMFLTLLC…CFTQLIDLST (294 aa)). 5 consecutive transmembrane segments (helical) span residues 43–63 (FLTLLCLTLLEQFVIYQVGLI), 76–96 (LEGFKTLTFLAVMLIVLNSTL), 190–210 (IFGYFILGTVVNKTLMGPIVM), 279–299 (YLGSILSYVVIAIPIFSGVYG), and 314–334 (AFVCIYLISCFTQLIDLSTTL). One can recognise an ABC transporter domain in the interval 389–603 (LERVSISAPS…GGGRWELMRI (215 aa)). ATP is bound at residue 421–428 (GNTGTGKT).

It belongs to the ABC transporter superfamily. ABCD family. Peroxisomal fatty acyl CoA transporter (TC 3.A.1.203) subfamily. As to quaternary structure, homodimer or heterodimer. Interacts with LMBRD1; this interaction induces the translocation of ABCD4 from the ER to the lysosome membrane. Interacts with LMBRD1 and MMACHC; this interaction ensures the transport of cobalamin from the lysosome to the cytosol. As to expression, ubiquitous.

It is found in the endoplasmic reticulum membrane. The protein resides in the lysosome membrane. The enzyme catalyses an R-cob(III)alamin(out) + ATP + H2O = an R-cob(III)alamin(in) + ADP + phosphate + H(+). Lysosomal membrane protein that transports cobalamin (Vitamin B12) from the lysosomal lumen to the cytosol in an ATP-dependent manner. Targeted by LMBRD1 lysosomal chaperone from the endoplasmic reticulum to the lysosomal membrane. Then forms a complex with lysosomal chaperone LMBRD1 and cytosolic MMACHC to transport cobalamin across the lysosomal membrane. This chain is Lysosomal cobalamin transporter ABCD4, found in Homo sapiens (Human).